Consider the following 205-residue polypeptide: tRNA (guanine-N(7)-)-methyltransferase (205 aa).

The S-adenosyl-L-methionine site is built by E36, E61, D88, and D109. D109 is a catalytic residue. K113 is a substrate binding site. An interaction with RNA region spans residues 115 to 120 (RHEKRR). Residues D145 and 183-186 (TGYE) contribute to the substrate site.

Belongs to the class I-like SAM-binding methyltransferase superfamily. TrmB family.

It carries out the reaction guanosine(46) in tRNA + S-adenosyl-L-methionine = N(7)-methylguanosine(46) in tRNA + S-adenosyl-L-homocysteine. Its pathway is tRNA modification; N(7)-methylguanine-tRNA biosynthesis. Functionally, catalyzes the formation of N(7)-methylguanine at position 46 (m7G46) in tRNA. In Mycoplasmopsis agalactiae (strain NCTC 10123 / CIP 59.7 / PG2) (Mycoplasma agalactiae), this protein is tRNA (guanine-N(7)-)-methyltransferase.